The sequence spans 333 residues: Torsin-1A (333 aa).

Positions M1 to A20 are cleaved as a signal peptide. Residues K92–G252 are interaction with SNAPIN. N144 and N159 each carry an N-linked (GlcNAc...) asparagine glycan. An interaction with KLC1 region spans residues G252–D333. The interaction with SYNE3 stretch occupies residues K313–D333.

It belongs to the ClpA/ClpB family. Torsin subfamily. Homohexamer. Interacts with TOR1B; the interaction may be specific of neural tissues. Interacts (ATP-bound) with TOR1AIP1 and TOR1AIP2; the interactions induce ATPase activity. Interacts with KLHL14; preferentially when ATP-free. Interacts with KLC1 (via TPR repeats); the interaction associates TOR1A with the kinesin oligomeric complex. Interacts with COPS4; the interaction associates TOR1A with the CSN complex. Interacts with SNAPIN; the interaction is direct and associates SNAPIN with the CSN complex. Interacts with STON2. Interacts (ATP-bound) with SYNE3 (via KASH domain); the interaction is required for SYNE3 nuclear envelope localization. Interacts with VIM; the interaction associates TOR1A with the cytoskeleton. Interacts with PLEC. Interacts (ATP-bound) with SLC6A3; regulates SLC6A3 transport to the plasma membrane. Post-translationally, N-glycosylated. In terms of tissue distribution, expressed in brain (at protein level).

The protein resides in the endoplasmic reticulum lumen. It localises to the nucleus inner membrane. Its subcellular location is the cell projection. The protein localises to the growth cone. It is found in the cytoplasmic vesicle membrane. The protein resides in the cytoplasmic vesicle. It localises to the secretory vesicle. Its subcellular location is the synaptic vesicle. It catalyses the reaction ATP + H2O = ADP + phosphate + H(+). Protein with chaperone functions important for the control of protein folding, processing, stability and localization as well as for the reduction of misfolded protein aggregates. Involved in the regulation of synaptic vesicle recycling, controls STON2 protein stability in collaboration with the COP9 signalosome complex (CSN). In the nucleus, may link the cytoskeleton with the nuclear envelope, this mechanism seems to be crucial for the control of nuclear polarity, cell movement and, specifically in neurons, nuclear envelope integrity. Participates in the cellular trafficking and may regulate the subcellular location of multipass membrane proteins such as the dopamine transporter SLC6A3, leading to the modulation of dopamine neurotransmission. In the endoplasmic reticulum, plays a role in the quality control of protein folding by increasing clearance of misfolded proteins such as SGCE variants or holding them in an intermediate state for proper refolding. May have a redundant function with TOR1B in non-neural tissues. In Rattus norvegicus (Rat), this protein is Torsin-1A (Tor1a).